The primary structure comprises 481 residues: MLKVLFTAAESAPFYKTGGLGDVTYALPKAIKKQGVDIRVAIPFYEKKFPAKYLPKVKDLTHFTLEMDGRPVYVGLKTIKLGDVTYYLIDNRQYFDRDGLYGYWDDGGRFGYFQMAVIEMLQVIEWIPDVIHANDWHTAFIPVLLKEKYGWIKPYQQIKTQLTIHNLQFQGWFPPSTLATVFGIGREGFNDDGFGQDGSINWLKGGINYADLVSTVSPSYAKEIQTPAFGEHLDGTLRKQSGKLVGILNGIDSEVYNPATDQNLAYNYDAKNLAGKAKDKKALQDEMHLPKRTDPLFAMVSRLTRQKGADLLVDALENFLVQNNVQVVVLGTGDQDLEEDLSSLQDRFPGQLAVRIDFDEGLAQRIYAGADYFMMPSAFEPSGLAQMMAMRYGTLPIVHETGGLRDSVLAYNAETGAGDGFSFWDYNAGVLTNILRMAKSVYADQPKVYAKLQQHAMVKDFDWHHSAAEYLKGYQRILGKA.

Residue Lys-16 coordinates ADP-alpha-D-glucose.

The protein belongs to the glycosyltransferase 1 family. Bacterial/plant glycogen synthase subfamily.

The catalysed reaction is [(1-&gt;4)-alpha-D-glucosyl](n) + ADP-alpha-D-glucose = [(1-&gt;4)-alpha-D-glucosyl](n+1) + ADP + H(+). Its pathway is glycan biosynthesis; glycogen biosynthesis. In terms of biological role, synthesizes alpha-1,4-glucan chains using ADP-glucose. This Lacticaseibacillus casei (strain BL23) (Lactobacillus casei) protein is Glycogen synthase.